Consider the following 470-residue polypeptide: Glutamate--tRNA ligase 1 (470 aa).

A 'HIGH' region motif is present at residues Pro8–Gly18. A 'KMSKS' region motif is present at residues Lys250–Arg254. An ATP-binding site is contributed by Lys253.

This sequence belongs to the class-I aminoacyl-tRNA synthetase family. Glutamate--tRNA ligase type 1 subfamily. Monomer.

The protein resides in the cytoplasm. The enzyme catalyses tRNA(Glu) + L-glutamate + ATP = L-glutamyl-tRNA(Glu) + AMP + diphosphate. Functionally, catalyzes the attachment of glutamate to tRNA(Glu) in a two-step reaction: glutamate is first activated by ATP to form Glu-AMP and then transferred to the acceptor end of tRNA(Glu). This Pseudothermotoga lettingae (strain ATCC BAA-301 / DSM 14385 / NBRC 107922 / TMO) (Thermotoga lettingae) protein is Glutamate--tRNA ligase 1.